The sequence spans 519 residues: Lysine 5,6-aminomutase alpha subunit (519 aa).

Position 57 to 59 (57 to 59) interacts with adenosylcob(III)alamin; that stretch reads DEV. Pyridoxal 5'-phosphate contacts are provided by residues 187 to 192, serine 241, tyrosine 266, arginine 271, and asparagine 302; that span reads RTTGQS.

The protein belongs to the KamD family. Heterotetramer of 2 alpha and 2 beta subunits. It depends on adenosylcob(III)alamin as a cofactor. The cofactor is pyridoxal 5'-phosphate.

It catalyses the reaction (3S)-3,6-diaminohexanoate = (3S,5S)-3,5-diaminohexanoate. The catalysed reaction is D-lysine = (2R,5S)-2,5-diaminohexanoate. It functions in the pathway amino-acid metabolism; lysine degradation. Rapidly inactivated in the presence of D-lysine and to a lesser extent in the absence of adenosylcobalamin (Adocbl). Activity is stable in the presence of Adocbl when D-lysine is absent. Adocbl imparts thermal stability at 37 degrees Celsius. Functionally, catalyzes the migration of the L-beta-lysine and D-lysine epsilon amino group to the delta carbon to produce 3,5-diaminohexanoate and 2,5-diaminohexanoate, respectively. This Acetoanaerobium sticklandii (strain ATCC 12662 / DSM 519 / JCM 1433 / CCUG 9281 / NCIMB 10654 / HF) (Clostridium sticklandii) protein is Lysine 5,6-aminomutase alpha subunit (kamD).